The primary structure comprises 186 residues: ATP synthase subunit delta (186 aa).

It belongs to the ATPase delta chain family. In terms of assembly, F-type ATPases have 2 components, F(1) - the catalytic core - and F(0) - the membrane proton channel. F(1) has five subunits: alpha(3), beta(3), gamma(1), delta(1), epsilon(1). CF(0) has four main subunits: a(1), b(1), b'(1) and c(10-14). The alpha and beta chains form an alternating ring which encloses part of the gamma chain. F(1) is attached to F(0) by a central stalk formed by the gamma and epsilon chains, while a peripheral stalk is formed by the delta, b and b' chains.

It is found in the cell inner membrane. In terms of biological role, f(1)F(0) ATP synthase produces ATP from ADP in the presence of a proton or sodium gradient. F-type ATPases consist of two structural domains, F(1) containing the extramembraneous catalytic core and F(0) containing the membrane proton channel, linked together by a central stalk and a peripheral stalk. During catalysis, ATP synthesis in the catalytic domain of F(1) is coupled via a rotary mechanism of the central stalk subunits to proton translocation. Its function is as follows. This protein is part of the stalk that links CF(0) to CF(1). It either transmits conformational changes from CF(0) to CF(1) or is implicated in proton conduction. In Roseobacter denitrificans (strain ATCC 33942 / OCh 114) (Erythrobacter sp. (strain OCh 114)), this protein is ATP synthase subunit delta.